Reading from the N-terminus, the 1744-residue chain is Transcription initiation factor TFIID subunit 1 (1744 aa).

Disordered regions lie at residues 1-65 (MNNT…EKNE), 248-275 (VSIRSGKPLNYRTPDDLPSTSSGPAPNS), 429-488 (PEDR…DNDP), 1001-1024 (QNQTLANTDPISTDDDSTDADSDN), 1071-1098 (TTNQVEKGEKKEEGEVTAEEKKSASQFG), and 1186-1213 (MKKNEEKAAHKVQKMTEKKVKPIKPPNP). Positions 43-52 (ACSSASNGGS) are enriched in polar residues. Residues 55–64 (VKMEPKVEKN) show a composition bias toward basic and acidic residues. Over residues 429–439 (PEDRRHDEGPD) the composition is skewed to basic and acidic residues. A compositionally biased stretch (basic residues) spans 440–449 (HHHHHHHHRK). Residues 477–488 (ESTMAQFTDNDP) show a composition bias toward polar residues. A compositionally biased stretch (acidic residues) spans 1012–1024 (STDDDSTDADSDN). 3 coiled-coil regions span residues 1019–1080 (DADS…KGEK), 1161–1204 (YAQM…TEKK), and 1282–1314 (NFAEIRKEQNREEKLKRKLAKMAEAAVRERQMA). Composition is skewed to basic and acidic residues over residues 1076 to 1093 (EKGEKKEEGEVTAEEKKS) and 1186 to 1205 (MKKNEEKAAHKVQKMTEKKV). A compositionally biased stretch (gly residues) spans 1319–1344 (YGGGASSSGGAGGGGSGIGGSTGGGI). The disordered stretch occupies residues 1319 to 1391 (YGGGASSSGG…SKRRSSMMPE (73 aa)). The segment covering 1354 to 1363 (SQISGTSSFL) has biased composition (polar residues). A compositionally biased stretch (low complexity) spans 1372–1381 (GGNRNSSVSG). Positions 1379–1386 (VSGSKRRS) match the Nuclear localization signal motif. Bromo domains follow at residues 1404–1512 (RARA…MIER) and 1537–1634 (YLLG…VKDQ). The span at 1666 to 1694 (DHMDEMEDHPTEEEEEDDDDEIMDDDMDI) shows a compositional bias: acidic residues. Disordered stretches follow at residues 1666-1702 (DHMDEMEDHPTEEEEEDDDDEIMDDDMDIDATGYSYD) and 1714-1744 (NDLAMSDSDEDERAEDVKRPANGDDNLLDSF).

Belongs to the TAF1 family. Component of the TFIID basal transcription factor complex, composed of TATA-box-binding protein tbp-1, and a number of TBP-associated factors (TAFs).

Its subcellular location is the nucleus. In terms of biological role, the TFIID basal transcription factor complex plays a major role in the initiation of RNA polymerase II (Pol II)-dependent transcription. TFIID recognizes and binds promoters via its subunit tbp-1, a TATA-box-binding protein, and promotes assembly of the pre-initiation complex (PIC). The TFIID complex consists of tbp-1 and TBP-associated factors (TAFs), including taf-1. May regulate RNA polymerase II activity and thereby may control transcription initiation by RNA polymerase II. Required for early embryonic development. Essential for embryonic transcription of several genes. The polypeptide is Transcription initiation factor TFIID subunit 1 (Caenorhabditis elegans).